Consider the following 818-residue polypeptide: Fibrous sheath CABYR-binding protein (818 aa).

The disordered stretch occupies residues 1-61; sequence MEEKDESEQS…PKAALSIGNI (61 aa). Phosphoserine occurs at positions 25, 57, and 182. 2 disordered regions span residues 195–727 and 773–805; these read SFSK…PFIT and LESG…NEGV. 3 stretches are compositionally biased toward low complexity: residues 490–511, 544–560, and 697–715; these read SPPA…PAEE, EAPA…PAEE, and AELQ…VSVE. The span at 773–794 shows a compositional bias: basic and acidic residues; the sequence is LESGNLDDKPKSEEPLERDTIP.

As to quaternary structure, interacts with CABYR. Interacts with ROPN1 and ROPN1L; the interaction increases upon spermatozoa capacitation conditions. Post-translationally, phosphorylated by PKA upon spermatozoa capacitation conditions.

The protein resides in the cell projection. Its subcellular location is the cilium. The protein localises to the flagellum. Functionally, may be involved in the later stages of fibrous sheath biogenesis and spermatozoa capacitation. Inhibits ROPN1 and ROPN1L SUMOylation. Binds calcium. This chain is Fibrous sheath CABYR-binding protein, found in Bos taurus (Bovine).